The sequence spans 67 residues: Epsilon-conotoxin TxVA (67 aa).

The signal sequence occupies residues 1–19 (MRCFPVFIILLLLIASAPC). Positions 20–50 (FDARTKTDDDVPLSSLRDNLKRTIRTRLNIR) are excised as a propeptide. Residues E51 and E54 each carry the 4-carboxyglutamate modification. 2 disulfide bridges follow: C52/C58 and C53/C59. 6'-bromotryptophan is present on W57. O-linked (GalNAc...) threonine glycosylation is present at T60. P63 carries the 4-hydroxyproline modification. A propeptide spanning residues 64–67 (LTGR) is cleaved from the precursor.

O-glycan consists of the disaccharide Gal-GalNAc. As to expression, expressed by the venom duct.

It is found in the secreted. Its function is as follows. Epsilon-conotoxins act at presynaptic membranes, blocking the calcium channels or G protein-coupled receptors. Causes hyperactivity upon intracranial injection into mice. Causes dorsal fins drooping in fish. This chain is Epsilon-conotoxin TxVA, found in Conus textile (Cloth-of-gold cone).